The sequence spans 610 residues: Phragmoplastin DRP1A (610 aa).

Met1 bears the N-acetylmethionine mark. Residues 31–300 (WDSLPAIAVV…LERVIKSRIP (270 aa)) enclose the Dynamin-type G domain. The interval 41-48 (GGQSSGKS) is G1 motif. 44–49 (SSGKSS) is a GTP binding site. A G2 motif region spans residues 67–69 (VTR). The interval 142–145 (DLPG) is G3 motif. Residues 211 to 214 (TKID) are G4 motif. GTP contacts are provided by residues 212–217 (KIDLMD) and 242–245 (NRSQ). The segment at 241–244 (VNRS) is G5 motif. The region spanning 518-610 (LRRIGSNVLS…SEIDAVAWSK (93 aa)) is the GED domain.

Belongs to the TRAFAC class dynamin-like GTPase superfamily. Dynamin/Fzo/YdjA family. As to quaternary structure, forms homodimer and may homooligomerize and heterooligomerize to form the phragmoplastin complex. Interacts with AGD3/VAN3. May interact with CALS1. Binds to AHK2. Binds to SH3P2. Forms a complex made of SH3P2 and DRP1A and triggers its accumulation at the cell plate. Interacts with DRP2B at the plasma membrane and in forming clathrin-coated vesicles (CCV). Binds to PHIP1. Ubiquitous. Expressed in leaves (at protein level).

Its subcellular location is the cytoplasm. The protein resides in the cytoskeleton. It localises to the phragmoplast. The protein localises to the cell cortex. It is found in the cytoplasmic vesicle. Its subcellular location is the clathrin-coated vesicle. The protein resides in the cell membrane. It catalyses the reaction GTP + H2O = GDP + phosphate + H(+). In terms of biological role, microtubule-associated force-producing protein that is targeted to at the leading edges of the forming cell plate during cytokinesis. Also plays a major role in plasma membrane maintenance and cell wall integrity with implications in vesicular trafficking, polar cell expansion, vascular formation, and other aspects of plant growth and development, including stigmatic papillae expansion. Collaboratively with DRP2B, participates in clathrin-coated vesicle formation during endocytosis. Necessary for BOR1 polar localization in low-boron (B) conditions as well as for BOR1 endocytosis and subsequent degradation under high-concentration of boron. Has a GTPase activity. Required for the sterols-dependent dynamic high lipid order observed at the cell plate of dividing cells. Together with SH3P2, converts the fused vesicles to tubular structures at the cell plate and phragmoplasts during cytokinesis. With DRP2B and PIP5K3, required for the precise coordination of polar ARAC3/ROP6 and ARAC4/ROP2 placement and subsequent root hair positioning during planar polarity formation in root hair-forming cells, probably by mediating the correct basal-to-planar polarity switching of D6PK into the polar, lipid-enriched domain. Involved in endocytosis required for cellulose deposition during cell wall formation and elongation. Interacts with plasma membrane-mimetic liposomes and induces their clustering. In Arabidopsis thaliana (Mouse-ear cress), this protein is Phragmoplastin DRP1A.